The primary structure comprises 545 residues: CTP synthase (545 aa).

An amidoligase domain region spans residues 1 to 264 (MQYIVVTGGV…ITRLSKLLNM (264 aa)). Serine 12 serves as a coordination point for CTP. Serine 12 is a UTP binding site. Residue 13–18 (GLGKGT) participates in ATP binding. Tyrosine 53 lines the L-glutamine pocket. Residue aspartate 70 participates in ATP binding. Mg(2+)-binding residues include aspartate 70 and glutamate 140. CTP-binding positions include 147-149 (DIE), 185-190 (KTKPTQ), and arginine 221. UTP contacts are provided by residues 185–190 (KTKPTQ) and arginine 221. Residues 294–527 (YVDLHDAYIS…VEQALIFKHR (234 aa)) enclose the Glutamine amidotransferase type-1 domain. Residue glycine 347 participates in L-glutamine binding. Cysteine 374 functions as the Nucleophile; for glutamine hydrolysis in the catalytic mechanism. L-glutamine is bound by residues 375-378 (LGFQ), glutamate 398, and arginine 455. Residues histidine 500 and glutamate 502 contribute to the active site.

Belongs to the CTP synthase family. Homotetramer.

The enzyme catalyses UTP + L-glutamine + ATP + H2O = CTP + L-glutamate + ADP + phosphate + 2 H(+). It carries out the reaction L-glutamine + H2O = L-glutamate + NH4(+). It catalyses the reaction UTP + NH4(+) + ATP = CTP + ADP + phosphate + 2 H(+). It participates in pyrimidine metabolism; CTP biosynthesis via de novo pathway; CTP from UDP: step 2/2. With respect to regulation, allosterically activated by GTP, when glutamine is the substrate; GTP has no effect on the reaction when ammonia is the substrate. The allosteric effector GTP functions by stabilizing the protein conformation that binds the tetrahedral intermediate(s) formed during glutamine hydrolysis. Inhibited by the product CTP, via allosteric rather than competitive inhibition. Functionally, catalyzes the ATP-dependent amination of UTP to CTP with either L-glutamine or ammonia as the source of nitrogen. Regulates intracellular CTP levels through interactions with the four ribonucleotide triphosphates. In Thermoplasma acidophilum (strain ATCC 25905 / DSM 1728 / JCM 9062 / NBRC 15155 / AMRC-C165), this protein is CTP synthase.